We begin with the raw amino-acid sequence, 115 residues long: DNA-directed RNA polymerase subunit omega (115 aa).

This sequence belongs to the RNA polymerase subunit omega family. As to quaternary structure, the RNAP catalytic core consists of 2 alpha, 1 beta, 1 beta' and 1 omega subunit. When a sigma factor is associated with the core the holoenzyme is formed, which can initiate transcription.

It catalyses the reaction RNA(n) + a ribonucleoside 5'-triphosphate = RNA(n+1) + diphosphate. Functionally, promotes RNA polymerase assembly. Latches the N- and C-terminal regions of the beta' subunit thereby facilitating its interaction with the beta and alpha subunits. This is DNA-directed RNA polymerase subunit omega from Cutibacterium acnes (strain DSM 16379 / KPA171202) (Propionibacterium acnes).